We begin with the raw amino-acid sequence, 360 residues long: MIMQEWFQNLFAATLGLGDLGITVGLVVSVIVKIVIILIPLILTVAYLTYFERKVIGFMQLRVGPNVTGPWGLIQPFADVFKLLFKEVTRPKLSNKALFYIGPIMSLAPSFAAWAVIPFNEEWVLTNINIGLLYILMITSLSVYGVIIAGWASNSKYSFLGAMRASAQSISYEIAMSAALVCVVMVSGSMNFSDIVAAQAKGIAGGSVFSWNWLPLFPIFIVYLISAVAETNRAPFDVAEGESEIVAGHHVEYSGFAFALFFLAEYIFMILIAALTSLMFLGGWLSPFPQSWGFIGTPSAFWMFVKMAAVLYWYLWIRATFPRYRYDQIMRLGWKVLIPIGFAYIVILGVWMISPLNLWK.

8 helical membrane passes run 22-42 (ITVGLVVSVIVKIVIILIPLI), 97-117 (ALFYIGPIMSLAPSFAAWAVI), 130-150 (IGLLYILMITSLSVYGVIIAG), 170-190 (ISYEIAMSAALVCVVMVSGSM), 208-228 (VFSWNWLPLFPIFIVYLISAV), 255-275 (GFAFALFFLAEYIFMILIAAL), 292-312 (WGFIGTPSAFWMFVKMAAVLY), and 336-356 (VLIPIGFAYIVILGVWMISPL).

Belongs to the complex I subunit 1 family. NDH-1 is composed of 14 different subunits. Subunits NuoA, H, J, K, L, M, N constitute the membrane sector of the complex.

It localises to the cell inner membrane. It carries out the reaction a quinone + NADH + 5 H(+)(in) = a quinol + NAD(+) + 4 H(+)(out). NDH-1 shuttles electrons from NADH, via FMN and iron-sulfur (Fe-S) centers, to quinones in the respiratory chain. The immediate electron acceptor for the enzyme in this species is believed to be ubiquinone. Couples the redox reaction to proton translocation (for every two electrons transferred, four hydrogen ions are translocated across the cytoplasmic membrane), and thus conserves the redox energy in a proton gradient. This subunit may bind ubiquinone. This Neisseria meningitidis serogroup C / serotype 2a (strain ATCC 700532 / DSM 15464 / FAM18) protein is NADH-quinone oxidoreductase subunit H.